The primary structure comprises 226 residues: Deoxyribose-phosphate aldolase (226 aa).

The active-site Proton donor/acceptor is the D84. K146 functions as the Schiff-base intermediate with acetaldehyde in the catalytic mechanism. The active-site Proton donor/acceptor is the K188.

Belongs to the DeoC/FbaB aldolase family. DeoC type 1 subfamily. Homodimer.

It is found in the cytoplasm. The catalysed reaction is 2-deoxy-D-ribose 5-phosphate = D-glyceraldehyde 3-phosphate + acetaldehyde. It functions in the pathway carbohydrate degradation; 2-deoxy-D-ribose 1-phosphate degradation; D-glyceraldehyde 3-phosphate and acetaldehyde from 2-deoxy-alpha-D-ribose 1-phosphate: step 2/2. In terms of biological role, catalyzes a reversible aldol reaction between acetaldehyde and D-glyceraldehyde 3-phosphate to generate 2-deoxy-D-ribose 5-phosphate. The sequence is that of Deoxyribose-phosphate aldolase from Pyrobaculum aerophilum (strain ATCC 51768 / DSM 7523 / JCM 9630 / CIP 104966 / NBRC 100827 / IM2).